We begin with the raw amino-acid sequence, 122 residues long: Large ribosomal subunit protein uL14c (122 aa).

Belongs to the universal ribosomal protein uL14 family. Part of the 50S ribosomal subunit.

The protein resides in the plastid. Its subcellular location is the chloroplast. Binds to 23S rRNA. This Chloranthus spicatus (Chulantree) protein is Large ribosomal subunit protein uL14c.